The sequence spans 289 residues: Zinc finger matrin-type protein 3 (289 aa).

Residues 1-59 form a disordered region; sequence MILLQHAGLPPPKRPSSSPPMSVAARSTGALQLPPQKPFGQEASLPLAGEEEPPKGGEQ. Pro residues predominate over residues 9–18; that stretch reads LPPPKRPSSS. 2 Matrin-type zinc fingers span residues 70-100 and 147-177; these read LYCK…KLRN and DYCK…RLRL. The span at 180–191 shows a compositional bias: polar residues; the sequence is AQSNSFSDSSEV. The disordered stretch occupies residues 180–200; sequence AQSNSFSDSSEVGQRRTRKEG. Residues 246–276 form a Matrin-type 3 zinc finger; sequence FYCSMCNVGAGEEVEFRQHLESKQHKSKVSE.

As to quaternary structure, interacts with dsRNA.

The protein resides in the nucleus. Its subcellular location is the nucleolus. Functionally, acts as a bona fide target gene of p53/TP53. May play a role in the TP53-dependent growth regulatory pathway. May contribute to TP53-mediated apoptosis by regulation of TP53 expression and translocation to the nucleus and nucleolus. This is Zinc finger matrin-type protein 3 from Bos taurus (Bovine).